Reading from the N-terminus, the 142-residue chain is Putative pre-16S rRNA nuclease (142 aa).

This sequence belongs to the YqgF nuclease family.

Its subcellular location is the cytoplasm. Its function is as follows. Could be a nuclease involved in processing of the 5'-end of pre-16S rRNA. This is Putative pre-16S rRNA nuclease from Blochmanniella floridana.